A 114-amino-acid polypeptide reads, in one-letter code: Photosystem II reaction center Psb28 protein (114 aa).

The protein belongs to the Psb28 family. As to quaternary structure, part of the photosystem II complex.

The protein resides in the plastid. The protein localises to the chloroplast thylakoid membrane. The protein is Photosystem II reaction center Psb28 protein of Thalassiosira pseudonana (Marine diatom).